The following is a 449-amino-acid chain: Integrator complex subunit 15 (449 aa).

This sequence belongs to the Integrator subunit 15 family. Component of the Integrator complex, composed of core subunits INTS1, INTS2, INTS3, INTS4, INTS5, INTS6, INTS7, INTS8, INTS9/RC74, INTS10, INTS11/CPSF3L, INTS12, INTS13, INTS14 and INTS15. The core complex associates with protein phosphatase 2A subunits PPP2CA and PPP2R1A, to form the Integrator-PP2A (INTAC) complex. INTS15 is part of the tail subcomplex, composed of INTS10, INTS13, INTS14 and INTS15.

The protein localises to the nucleus. It is found in the chromosome. Component of the integrator complex, a multiprotein complex that terminates RNA polymerase II (Pol II) transcription in the promoter-proximal region of genes. The integrator complex provides a quality checkpoint during transcription elongation by driving premature transcription termination of transcripts that are unfavorably configured for transcriptional elongation: the complex terminates transcription by (1) catalyzing dephosphorylation of the C-terminal domain (CTD) of Pol II subunit POLR2A/RPB1 and SUPT5H/SPT5, (2) degrading the exiting nascent RNA transcript via endonuclease activity and (3) promoting the release of Pol II from bound DNA. The integrator complex is also involved in terminating the synthesis of non-coding Pol II transcripts, such as enhancer RNAs (eRNAs), small nuclear RNAs (snRNAs), telomerase RNAs and long non-coding RNAs (lncRNAs). INTS15 is part of the integrator tail module that acts as a platform for the recruitment of transcription factors at promoters. Within the integrator complex, INTS15 is required to bridge different integrator modules. This Homo sapiens (Human) protein is Integrator complex subunit 15.